We begin with the raw amino-acid sequence, 314 residues long: Ribose-phosphate pyrophosphokinase (314 aa).

Residues 37 to 39 (DGE) and 96 to 97 (RQ) each bind ATP. Mg(2+) contacts are provided by H131 and D170. The active site involves K194. D-ribose 5-phosphate is bound by residues R196, D220, and 224-228 (DTGGT).

The protein belongs to the ribose-phosphate pyrophosphokinase family. Class I subfamily. Homohexamer. The cofactor is Mg(2+).

The protein resides in the cytoplasm. It catalyses the reaction D-ribose 5-phosphate + ATP = 5-phospho-alpha-D-ribose 1-diphosphate + AMP + H(+). It participates in metabolic intermediate biosynthesis; 5-phospho-alpha-D-ribose 1-diphosphate biosynthesis; 5-phospho-alpha-D-ribose 1-diphosphate from D-ribose 5-phosphate (route I): step 1/1. Involved in the biosynthesis of the central metabolite phospho-alpha-D-ribosyl-1-pyrophosphate (PRPP) via the transfer of pyrophosphoryl group from ATP to 1-hydroxyl of ribose-5-phosphate (Rib-5-P). This is Ribose-phosphate pyrophosphokinase from Vibrio cholerae serotype O1 (strain ATCC 39315 / El Tor Inaba N16961).